We begin with the raw amino-acid sequence, 566 residues long: Glutamate--tRNA ligase (566 aa).

Positions 104–114 (PNPDGPLHLGN) match the 'HIGH' region motif.

The protein belongs to the class-I aminoacyl-tRNA synthetase family. Glutamate--tRNA ligase type 2 subfamily.

Its subcellular location is the cytoplasm. It catalyses the reaction tRNA(Glu) + L-glutamate + ATP = L-glutamyl-tRNA(Glu) + AMP + diphosphate. Functionally, catalyzes the attachment of glutamate to tRNA(Glu) in a two-step reaction: glutamate is first activated by ATP to form Glu-AMP and then transferred to the acceptor end of tRNA(Glu). This Metallosphaera sedula (strain ATCC 51363 / DSM 5348 / JCM 9185 / NBRC 15509 / TH2) protein is Glutamate--tRNA ligase.